Here is a 203-residue protein sequence, read N- to C-terminus: Large ribosomal subunit protein uL18 (203 aa).

The protein belongs to the universal ribosomal protein uL18 family. Part of the 50S ribosomal subunit. Contacts the 5S and 23S rRNAs.

Its function is as follows. This is one of the proteins that bind and probably mediate the attachment of the 5S RNA into the large ribosomal subunit, where it forms part of the central protuberance. The polypeptide is Large ribosomal subunit protein uL18 (Pyrococcus horikoshii (strain ATCC 700860 / DSM 12428 / JCM 9974 / NBRC 100139 / OT-3)).